The sequence spans 779 residues: Phosphoribosylformylglycinamidine synthase subunit PurL (779 aa).

His52 is a catalytic residue. Residues Tyr55 and Lys94 each coordinate ATP. Position 96 (Glu96) interacts with Mg(2+). Substrate is bound by residues 97–100 and Arg119; that span reads SHNH. The Proton acceptor role is filled by His98. Asp120 is a Mg(2+) binding site. Gln243 serves as a coordination point for substrate. Asp271 contributes to the Mg(2+) binding site. 315-317 contacts substrate; sequence ESQ. ATP is bound by residues Asn523 and Gly560. Asn561 provides a ligand contact to Mg(2+). Ser563 lines the substrate pocket.

Belongs to the FGAMS family. Monomer. Part of the FGAM synthase complex composed of 1 PurL, 1 PurQ and 2 PurS subunits.

The protein localises to the cytoplasm. The enzyme catalyses N(2)-formyl-N(1)-(5-phospho-beta-D-ribosyl)glycinamide + L-glutamine + ATP + H2O = 2-formamido-N(1)-(5-O-phospho-beta-D-ribosyl)acetamidine + L-glutamate + ADP + phosphate + H(+). Its pathway is purine metabolism; IMP biosynthesis via de novo pathway; 5-amino-1-(5-phospho-D-ribosyl)imidazole from N(2)-formyl-N(1)-(5-phospho-D-ribosyl)glycinamide: step 1/2. Part of the phosphoribosylformylglycinamidine synthase complex involved in the purines biosynthetic pathway. Catalyzes the ATP-dependent conversion of formylglycinamide ribonucleotide (FGAR) and glutamine to yield formylglycinamidine ribonucleotide (FGAM) and glutamate. The FGAM synthase complex is composed of three subunits. PurQ produces an ammonia molecule by converting glutamine to glutamate. PurL transfers the ammonia molecule to FGAR to form FGAM in an ATP-dependent manner. PurS interacts with PurQ and PurL and is thought to assist in the transfer of the ammonia molecule from PurQ to PurL. The chain is Phosphoribosylformylglycinamidine synthase subunit PurL from Prochlorococcus marinus (strain MIT 9312).